Consider the following 370-residue polypeptide: Ferrochelatase (370 aa).

Residues His-210 and Glu-291 each contribute to the Fe cation site.

Belongs to the ferrochelatase family.

The protein localises to the cytoplasm. The enzyme catalyses heme b + 2 H(+) = protoporphyrin IX + Fe(2+). It functions in the pathway porphyrin-containing compound metabolism; protoheme biosynthesis; protoheme from protoporphyrin-IX: step 1/1. Catalyzes the ferrous insertion into protoporphyrin IX. The polypeptide is Ferrochelatase (Marinobacter nauticus (strain ATCC 700491 / DSM 11845 / VT8) (Marinobacter aquaeolei)).